Consider the following 648-residue polypeptide: Transmembrane 9 superfamily member 8 (648 aa).

The signal sequence occupies residues M1–S33. Residues F34 to H285 lie on the Lumenal side of the membrane. A helical membrane pass occupies residues W286–I306. Residues M307 to G355 lie on the Cytoplasmic side of the membrane. A helical transmembrane segment spans residues T356–L376. Residues S377 to R381 lie on the Lumenal side of the membrane. The chain crosses the membrane as a helical span at residues G382–A402. The Cytoplasmic portion of the chain corresponds to S403–T422. A helical membrane pass occupies residues A423–G443. The Lumenal segment spans residues Q444–M455. Residues F456 to I476 traverse the membrane as a helical segment. The Cytoplasmic segment spans residues G477–V506. A helical membrane pass occupies residues F507–I527. Topologically, residues L528–Y538 are lumenal. The helical transmembrane segment at I539 to V559 threads the bilayer. The Cytoplasmic segment spans residues V560 to S577. The chain crosses the membrane as a helical span at residues Y578–T598. Residues K599–K604 are Lumenal-facing. Residues L605 to L625 form a helical membrane-spanning segment. Topologically, residues T626–D648 are cytoplasmic. The short motif at F637–Y642 is the Endoplasmic reticulum export signal element. The Golgi retention signal signature appears at K646–D648.

The protein belongs to the nonaspanin (TM9SF) (TC 9.A.2) family.

The protein localises to the endosome membrane. It is found in the golgi apparatus membrane. In Arabidopsis thaliana (Mouse-ear cress), this protein is Transmembrane 9 superfamily member 8.